A 416-amino-acid polypeptide reads, in one-letter code: Serine/threonine transporter SstT (416 aa).

Transmembrane regions (helical) follow at residues 14–34 (GSIV…ALLS), 43–63 (FLGT…VFVL), 82–102 (VLVL…VASF), 141–161 (ALAT…GVAL), 192–212 (IGVF…ALMG), 220–240 (LLGS…FLAI), 298–318 (MAGA…TLGV), 339–359 (ASGV…LFGI), and 363–383 (VAMQ…SAET).

This sequence belongs to the dicarboxylate/amino acid:cation symporter (DAACS) (TC 2.A.23) family.

It localises to the cell inner membrane. The enzyme catalyses L-serine(in) + Na(+)(in) = L-serine(out) + Na(+)(out). It carries out the reaction L-threonine(in) + Na(+)(in) = L-threonine(out) + Na(+)(out). Involved in the import of serine and threonine into the cell, with the concomitant import of sodium (symport system). In Laribacter hongkongensis (strain HLHK9), this protein is Serine/threonine transporter SstT.